Reading from the N-terminus, the 398-residue chain is 2,3,4,5-tetrahydropyridine-2,6-dicarboxylate N-succinyltransferase (398 aa).

Glu-268 acts as the Acyl-anhydride intermediate in catalysis. Succinyl-CoA contacts are provided by residues Arg-270, Gly-285, Ser-288, Ala-311, 326 to 327, Gly-334, Lys-361, and 374 to 377; these read DG and RQNS.

This sequence belongs to the type 2 tetrahydrodipicolinate N-succinyltransferase family. In terms of assembly, homotrimer.

The protein resides in the cytoplasm. It carries out the reaction (S)-2,3,4,5-tetrahydrodipicolinate + succinyl-CoA + H2O = (S)-2-succinylamino-6-oxoheptanedioate + CoA. It functions in the pathway amino-acid biosynthesis; L-lysine biosynthesis via DAP pathway; LL-2,6-diaminopimelate from (S)-tetrahydrodipicolinate (succinylase route): step 1/3. Its function is as follows. Catalyzes the conversion of the cyclic tetrahydrodipicolinate (THDP) into the acyclic N-succinyl-L-2-amino-6-oxopimelate using succinyl-CoA. The polypeptide is 2,3,4,5-tetrahydropyridine-2,6-dicarboxylate N-succinyltransferase (Sulfurimonas denitrificans (strain ATCC 33889 / DSM 1251) (Thiomicrospira denitrificans (strain ATCC 33889 / DSM 1251))).